Reading from the N-terminus, the 336-residue chain is Glyceraldehyde-3-phosphate dehydrogenase (336 aa).

Residues 12–13 (RI), Asp34, and Met79 contribute to the NAD(+) site. Residues 150-152 (SCT), Thr181, 210-211 (TG), and Arg233 contribute to the D-glyceraldehyde 3-phosphate site. Catalysis depends on Cys151, which acts as the Nucleophile. Asn316 contributes to the NAD(+) binding site.

Belongs to the glyceraldehyde-3-phosphate dehydrogenase family. As to quaternary structure, homotetramer.

The protein resides in the cytoplasm. The enzyme catalyses D-glyceraldehyde 3-phosphate + phosphate + NAD(+) = (2R)-3-phospho-glyceroyl phosphate + NADH + H(+). It participates in carbohydrate degradation; glycolysis; pyruvate from D-glyceraldehyde 3-phosphate: step 1/5. The protein is Glyceraldehyde-3-phosphate dehydrogenase of Echinococcus multilocularis (Fox tapeworm).